The chain runs to 316 residues: Retron Ec73 reverse transcriptase (316 aa).

The region spanning 1 to 243 (MRIYSLIDSQ…GSIVVTGLKV (243 aa)) is the Reverse transcriptase domain. Residues D99, D189, and D190 each contribute to the Mg(2+) site. The necessary and required for recognition and binding of RNA stretch occupies residues 247–316 (FHITLHRSMK…WIQNLHNKVE (70 aa)).

This sequence belongs to the bacterial reverse transcriptase family.

It catalyses the reaction DNA(n) + a 2'-deoxyribonucleoside 5'-triphosphate = DNA(n+1) + diphosphate. In terms of biological role, reverse transcriptase (RT) component of antiviral defense system retron Ec73, composed of a non-coding RNA (ncRNA) followed by a ribosyltransferase/DNA-binding protein then a reverse transcriptase (RT). Expression of this retron confers protection against bacteriophages SECphi4, SECphi6, SECphi27 and P1. At multiplicity of infection (MOI) of 0.02 cultures grow normally when infected with SECphi4 without collapsing, at MOI 2 cultures enter growth stasis. Responsible for synthesis of msDNA-Ec73 (a branched molecule with RNA linked by a 2',5'-phosphodiester bond to ssDNA). The retron transcript serves as primer (from a conserved internal G residue) and template for the reaction, and codes for the RT. Recognizes only its cognate RNA as a primer template. In Escherichia coli, this protein is Retron Ec73 reverse transcriptase.